The sequence spans 137 residues: Putative pre-16S rRNA nuclease (137 aa).

The protein belongs to the YqgF nuclease family.

Its subcellular location is the cytoplasm. Its function is as follows. Could be a nuclease involved in processing of the 5'-end of pre-16S rRNA. The sequence is that of Putative pre-16S rRNA nuclease from Clostridium botulinum (strain 657 / Type Ba4).